We begin with the raw amino-acid sequence, 281 residues long: ATP phosphoribosyltransferase (281 aa).

Belongs to the ATP phosphoribosyltransferase family. Long subfamily. It depends on Mg(2+) as a cofactor.

The protein resides in the cytoplasm. It carries out the reaction 1-(5-phospho-beta-D-ribosyl)-ATP + diphosphate = 5-phospho-alpha-D-ribose 1-diphosphate + ATP. It participates in amino-acid biosynthesis; L-histidine biosynthesis; L-histidine from 5-phospho-alpha-D-ribose 1-diphosphate: step 1/9. Feedback inhibited by histidine. Its function is as follows. Catalyzes the condensation of ATP and 5-phosphoribose 1-diphosphate to form N'-(5'-phosphoribosyl)-ATP (PR-ATP). Has a crucial role in the pathway because the rate of histidine biosynthesis seems to be controlled primarily by regulation of HisG enzymatic activity. This is ATP phosphoribosyltransferase from Kocuria rhizophila (strain ATCC 9341 / DSM 348 / NBRC 103217 / DC2201).